The primary structure comprises 269 residues: 4-hydroxy-tetrahydrodipicolinate reductase (269 aa).

Residues 10–15 (GSSGRM) and Glu-36 contribute to the NAD(+) site. Arg-37 is an NADP(+) binding site. NAD(+) contacts are provided by residues 99 to 101 (GTT) and 123 to 126 (APNM). Residue His-156 is the Proton donor/acceptor of the active site. Residue His-157 participates in (S)-2,3,4,5-tetrahydrodipicolinate binding. Residue Lys-160 is the Proton donor of the active site. A (S)-2,3,4,5-tetrahydrodipicolinate-binding site is contributed by 166–167 (GT).

Belongs to the DapB family.

The protein localises to the cytoplasm. The catalysed reaction is (S)-2,3,4,5-tetrahydrodipicolinate + NAD(+) + H2O = (2S,4S)-4-hydroxy-2,3,4,5-tetrahydrodipicolinate + NADH + H(+). It carries out the reaction (S)-2,3,4,5-tetrahydrodipicolinate + NADP(+) + H2O = (2S,4S)-4-hydroxy-2,3,4,5-tetrahydrodipicolinate + NADPH + H(+). The protein operates within amino-acid biosynthesis; L-lysine biosynthesis via DAP pathway; (S)-tetrahydrodipicolinate from L-aspartate: step 4/4. Its function is as follows. Catalyzes the conversion of 4-hydroxy-tetrahydrodipicolinate (HTPA) to tetrahydrodipicolinate. The polypeptide is 4-hydroxy-tetrahydrodipicolinate reductase (Nitrosospira multiformis (strain ATCC 25196 / NCIMB 11849 / C 71)).